The chain runs to 451 residues: AAA-ATPase At3g50940 (451 aa).

An N-terminal signal peptide occupies residues M1–A25. G254–S261 contributes to the ATP binding site.

This sequence belongs to the AAA ATPase family. BCS1 subfamily. Mg(2+) is required as a cofactor.

The catalysed reaction is ATP + H2O = ADP + phosphate + H(+). This chain is AAA-ATPase At3g50940, found in Arabidopsis thaliana (Mouse-ear cress).